The primary structure comprises 85 residues: Small ribosomal subunit protein bS16c (85 aa).

The protein belongs to the bacterial ribosomal protein bS16 family.

The protein resides in the plastid. Its subcellular location is the chloroplast. In Agrostis stolonifera (Creeping bentgrass), this protein is Small ribosomal subunit protein bS16c.